Reading from the N-terminus, the 124-residue chain is Small ribosomal subunit protein uS13 (124 aa).

The segment at 95 to 124 (GLPVRGQRTKTNARTRKGPKRTIAGKKKAR) is disordered.

Belongs to the universal ribosomal protein uS13 family. In terms of assembly, part of the 30S ribosomal subunit. Forms a loose heterodimer with protein S19. Forms two bridges to the 50S subunit in the 70S ribosome.

Located at the top of the head of the 30S subunit, it contacts several helices of the 16S rRNA. In the 70S ribosome it contacts the 23S rRNA (bridge B1a) and protein L5 of the 50S subunit (bridge B1b), connecting the 2 subunits; these bridges are implicated in subunit movement. Contacts the tRNAs in the A and P-sites. This chain is Small ribosomal subunit protein uS13, found in Mycobacterium marinum (strain ATCC BAA-535 / M).